The sequence spans 622 residues: Dehydrogenase xptC (622 aa).

An N-terminal signal peptide occupies residues 1–18; that stretch reads MAKLSVILLFRSLLLCGA. Residues 47-48, 68-69, and 123-126 each bind FAD; these read VS, EA, and NAMI. Residues asparagine 160, asparagine 173, asparagine 357, asparagine 364, and asparagine 480 are each glycosylated (N-linked (GlcNAc...) asparagine). Residue 598 to 599 coordinates FAD; it reads PM.

This sequence belongs to the GMC oxidoreductase family. In terms of assembly, homodimer. The cofactor is FAD.

Its pathway is secondary metabolite biosynthesis. Dehydrogenase involved in the conversion of monodictyphenone to the prenyl xanthones such as emericellin, shamixanthone and epishamixanthone. Monodictyphenone is first converted to variecoxanthone A via a paeciloxanthone intermediate by the consecutive actions of the FAD-dependent monooxygenase mdpD and the xanthone prenyltransferase xptB. XptB catalyzes regular O-prenylation at the hydroxy group of C-7 of the xanthone ring. Variecoxanthone A is further prenylated to emericellin by xptA before being reduced to shamixanthone and epishamixanthone by the dehydrogenase xptC. The chain is Dehydrogenase xptC from Emericella nidulans (strain FGSC A4 / ATCC 38163 / CBS 112.46 / NRRL 194 / M139) (Aspergillus nidulans).